Consider the following 122-residue polypeptide: Large ribosomal subunit protein uL14c (122 aa).

This sequence belongs to the universal ribosomal protein uL14 family. Part of the 50S ribosomal subunit.

The protein localises to the plastid. It is found in the chloroplast. Functionally, binds to 23S rRNA. This is Large ribosomal subunit protein uL14c from Arabis hirsuta (Hairy rock-cress).